The chain runs to 237 residues: Phosphoribosylaminoimidazole-succinocarboxamide synthase (237 aa).

It belongs to the SAICAR synthetase family.

It catalyses the reaction 5-amino-1-(5-phospho-D-ribosyl)imidazole-4-carboxylate + L-aspartate + ATP = (2S)-2-[5-amino-1-(5-phospho-beta-D-ribosyl)imidazole-4-carboxamido]succinate + ADP + phosphate + 2 H(+). Its pathway is purine metabolism; IMP biosynthesis via de novo pathway; 5-amino-1-(5-phospho-D-ribosyl)imidazole-4-carboxamide from 5-amino-1-(5-phospho-D-ribosyl)imidazole-4-carboxylate: step 1/2. The chain is Phosphoribosylaminoimidazole-succinocarboxamide synthase from Deinococcus deserti (strain DSM 17065 / CIP 109153 / LMG 22923 / VCD115).